We begin with the raw amino-acid sequence, 307 residues long: MSDSRGVLSISTSTTFQGLIHTLNRYWAEQGCVLVQPLDLEVGAGTFHPATFLRALGPEPWNAAYVQPSRRPTDGRYGENPNRLQRYYQYQVAMKPNPDNLQELYLASLQALGIDPLVHDVRFVEDNWESPTLGAWGLGWEVWLNGMEVTQFTYFQQAGGLECKPVLGEVTYGLERLCMYLQSCDNVYDLVWTYGPDGTPVTYGDVYHQNEVEQSAYNFEHANVTELLHTFDACEREAKALVEAVLPLPAYEKVIKASHCFNLLDARRTISVTERQRYILRIRTLSQEVAKAYYAQREKLGFPNLRR.

This sequence belongs to the class-II aminoacyl-tRNA synthetase family. In terms of assembly, tetramer of two alpha and two beta subunits.

The protein resides in the cytoplasm. The enzyme catalyses tRNA(Gly) + glycine + ATP = glycyl-tRNA(Gly) + AMP + diphosphate. This chain is Glycine--tRNA ligase alpha subunit (glyQ), found in Xylella fastidiosa (strain 9a5c).